The primary structure comprises 253 residues: Complement C1q subcomponent subunit B (253 aa).

An N-terminal signal peptide occupies residues 1 to 27 (MMMKIPWGSIPVLMLLLLLGLIDISQA). Gln-28 carries the pyrrolidone carboxylic acid modification. Pro-35, Pro-38, Pro-41, Pro-53, and Pro-56 each carry 4-hydroxyproline. 2 Collagen-like domains span residues 37–86 (IPGI…PGNP) and 60–114 (GEKG…GESG). Residues 38–115 (PGIPGIPGTP…APGPKGESGD (78 aa)) form a disordered region. Residues Lys-59 and Lys-62 each carry the 5-hydroxylysine modification. Position 65 is a 4-hydroxyproline (Pro-65). Positions 70–79 (DHGEFGEKGD) are enriched in basic and acidic residues. A 5-hydroxylysine modification is found at Lys-77. A compositionally biased stretch (low complexity) spans 80 to 92 (PGIPGNPGKVGPK). 2 positions are modified to 4-hydroxyproline: Pro-83 and Pro-86. 5-hydroxylysine occurs at positions 92 and 98. A compositionally biased stretch (gly residues) spans 96-105 (GPKGGPGAPG). Pro-101, Pro-104, and Pro-107 each carry 4-hydroxyproline. Position 110 is a 5-hydroxylysine (Lys-110). The C1q domain maps to 117-253 (KATQKIAFSA…GFLLFPDMEA (137 aa)). A disulfide bridge connects residues Cys-181 and Cys-198. Asp-199, Tyr-200, and Gln-206 together coordinate Ca(2+).

In terms of assembly, core component of the complement C1 complex, a calcium-dependent complex composed of 1 molecule of the C1Q subcomplex, 2 molecules of C1R and 2 molecules of C1S. The C1Q subcomplex is composed 18 subunits: 3 chains of C1QA, C1QB, and C1QC trimerize to form 6 collagen-like triple helices connected to six globular ligand-recognition modules (C1q domain). Post-translationally, hydroxylated on lysine and proline residues. Hydroxylated lysine residues can be glycosylated. Human C1Q contains up to 68.3 hydroxylysine-galactosylglucose residues and up to 2.5 hydroxylysine-galactose per molecule. Total percentage hydroxylysine residues glycosylated is 86.4%.

The protein localises to the secreted. It localises to the cell surface. The C1Q subcomplex is inhibited by sulfated molecules, such as triterpenoid sulfates, heparan sulfate, or chondroitin sulfates. Core component of the complement C1 complex, a multiprotein complex that initiates the classical pathway of the complement system, a cascade of proteins that leads to phagocytosis and breakdown of pathogens and signaling that strengthens the adaptive immune system. The classical complement pathway is initiated by the C1Q subcomplex of the C1 complex, which specifically binds IgG or IgM immunoglobulins complexed with antigens, forming antigen-antibody complexes on the surface of pathogens: C1QA, together with C1QB and C1QC, specifically recognizes and binds the Fc regions of IgG or IgM via its C1q domain. Immunoglobulin-binding activates the proenzyme C1R, which cleaves C1S, initiating the proteolytic cascade of the complement system. The C1Q subcomplex is activated by a hexamer of IgG complexed with antigens, while it is activated by a pentameric IgM. The C1Q subcomplex also recognizes and binds phosphatidylserine exposed on the surface of cells undergoing programmed cell death, possibly promoting activation of the complement system. This is Complement C1q subcomponent subunit B from Homo sapiens (Human).